Reading from the N-terminus, the 324-residue chain is Glutamyl-Q tRNA(Asp) synthetase (324 aa).

L-glutamate-binding positions include R5–S9 and E41. The 'HIGH' region signature appears at P8 to N18. Zn(2+) is bound by residues C105, C107, Y128, and C132. Positions 193 and 211 each coordinate L-glutamate. A 'KMSKS' region motif is present at residues R249–R253. K252 is an ATP binding site.

Belongs to the class-I aminoacyl-tRNA synthetase family. GluQ subfamily. The cofactor is Zn(2+).

Catalyzes the tRNA-independent activation of glutamate in presence of ATP and the subsequent transfer of glutamate onto a tRNA(Asp). Glutamate is transferred on the 2-amino-5-(4,5-dihydroxy-2-cyclopenten-1-yl) moiety of the queuosine in the wobble position of the QUC anticodon. The chain is Glutamyl-Q tRNA(Asp) synthetase from Nitratidesulfovibrio vulgaris (strain ATCC 29579 / DSM 644 / CCUG 34227 / NCIMB 8303 / VKM B-1760 / Hildenborough) (Desulfovibrio vulgaris).